We begin with the raw amino-acid sequence, 571 residues long: Streptolysin O (571 aa).

The first 33 residues, 1–33 (MSNKKTFKKYSRVAGLLTAALIIGNLVTANAES), serve as a signal peptide directing secretion. Residues 30–108 (NAESNKQNTA…KKSEEDHTEE (79 aa)) form a disordered region. The segment covering 37 to 48 (NTASTETTTTNE) has biased composition (low complexity). Composition is skewed to basic and acidic residues over residues 50–68 (PKPE…KTDD) and 79–108 (APKE…HTEE). 4 consecutive transmembrane segments (beta stranded) span residues 260–273 (KSQI…NSKI), 280–289 (IDFKSISKGE), 358–367 (SNDVEAAFSA), and 375–387 (KTNG…LENS). Positions 529-539 (ECTGLAWEWWR) match the Conserved undecapeptide motif. Positions 561–562 (TL) match the Cholesterol binding motif.

The protein belongs to the cholesterol-dependent cytolysin family. Homooligomeric pore complex of 35 to 50 subunits; when inserted in the host membrane.

Its subcellular location is the secreted. The protein resides in the host cell membrane. Functionally, a cholesterol-dependent toxin that causes cytolysis by forming pores in cholesterol containing host membranes. After binding to target membranes, the protein undergoes a major conformation change, leading to its insertion in the host membrane and formation of an oligomeric pore complex. Cholesterol is required for binding to host membranes, membrane insertion and pore formation; cholesterol binding is mediated by a Thr-Leu pair in the C-terminus. Can be reversibly inactivated by oxidation. The polypeptide is Streptolysin O (slo) (Streptococcus pyogenes serotype M18 (strain MGAS8232)).